Consider the following 562-residue polypeptide: Glutamate--tRNA ligase (562 aa).

Positions 90–100 match the 'HIGH' region motif; sequence PNPSGLLHIGH.

Belongs to the class-I aminoacyl-tRNA synthetase family. Glutamate--tRNA ligase type 2 subfamily.

It localises to the cytoplasm. The catalysed reaction is tRNA(Glu) + L-glutamate + ATP = L-glutamyl-tRNA(Glu) + AMP + diphosphate. In terms of biological role, catalyzes the attachment of glutamate to tRNA(Glu) in a two-step reaction: glutamate is first activated by ATP to form Glu-AMP and then transferred to the acceptor end of tRNA(Glu). This Nanoarchaeum equitans (strain Kin4-M) protein is Glutamate--tRNA ligase.